Here is a 564-residue protein sequence, read N- to C-terminus: Sulfite reductase [NADPH] hemoprotein beta-component 1 (564 aa).

Residues Cys426, Cys432, Cys471, and Cys475 each coordinate [4Fe-4S] cluster. Residue Cys475 participates in siroheme binding.

This sequence belongs to the nitrite and sulfite reductase 4Fe-4S domain family. Alpha(8)-beta(8). The alpha component is a flavoprotein, the beta component is a hemoprotein. The cofactor is siroheme. [4Fe-4S] cluster is required as a cofactor.

It carries out the reaction hydrogen sulfide + 3 NADP(+) + 3 H2O = sulfite + 3 NADPH + 4 H(+). It participates in sulfur metabolism; hydrogen sulfide biosynthesis; hydrogen sulfide from sulfite (NADPH route): step 1/1. Its function is as follows. Component of the sulfite reductase complex that catalyzes the 6-electron reduction of sulfite to sulfide. This is one of several activities required for the biosynthesis of L-cysteine from sulfate. In Pectobacterium carotovorum subsp. carotovorum (strain PC1), this protein is Sulfite reductase [NADPH] hemoprotein beta-component 1.